Consider the following 1538-residue polypeptide: Ferredoxin-dependent glutamate synthase (1538 aa).

Cysteine 34 acts as the For GATase activity in catalysis. Residues 34-431 (CGVGFIADVN…PGQMISVDIF (398 aa)) form the Glutamine amidotransferase type-2 domain. Residue 1109-1166 (LSEVHQLLAENQLRDRVTLRVDGGLRTGSDIVLAAIMGAEEFGFGTVAMIATGCIMAR) participates in FMN binding. The [3Fe-4S] cluster site is built by cysteine 1162, cysteine 1168, and cysteine 1173.

This sequence belongs to the glutamate synthase family. As to quaternary structure, monomer. The cofactor is [3Fe-4S] cluster. FAD serves as cofactor. FMN is required as a cofactor.

The protein localises to the plastid. The protein resides in the chloroplast stroma. It catalyses the reaction 2 oxidized [2Fe-2S]-[ferredoxin] + 2 L-glutamate = L-glutamine + 2 reduced [2Fe-2S]-[ferredoxin] + 2-oxoglutarate + 2 H(+). Its pathway is amino-acid biosynthesis; L-glutamate biosynthesis via GLT pathway; L-glutamate from 2-oxoglutarate and L-glutamine (ferredoxin route): step 1/1. The protein operates within energy metabolism; nitrogen metabolism. This is Ferredoxin-dependent glutamate synthase (gltB) from Pyropia yezoensis (Susabi-nori).